The chain runs to 536 residues: Organic anion transporter 3 (536 aa).

Over 1–11 (MTFSEILDRVG) the chain is Cytoplasmic. Position 4 is a phosphoserine (serine 4). The chain crosses the membrane as a helical span at residues 12-32 (SMGPFQYLHVTLLALPVLGIA). Residues 33–123 (NHNLLQIFTA…LVCSSNKLKE (91 aa)) are Extracellular-facing. N-linked (GlcNAc...) asparagine glycans are attached at residues asparagine 81 and asparagine 86. A helical membrane pass occupies residues 124–144 (MAQSIFMAGILVGGPVIGELS). At 145 to 158 (DRFGRKPILTWSYL) the chain is on the cytoplasmic side. The helical transmembrane segment at 159 to 179 (MLAASGSGAAFSPSLPVYMIF) threads the bilayer. Residue arginine 180 is a topological domain, extracellular. The helical transmembrane segment at 181 to 201 (FLCGCSISGISLSTVILNVEW) threads the bilayer. The Cytoplasmic segment spans residues 202 to 212 (VPTSMRAISST). The chain crosses the membrane as a helical span at residues 213–233 (SIGYCYTIGQFILSGLAYAIP). Residues 234 to 236 (QWR) lie on the Extracellular side of the membrane. Residues 237–257 (WLQLTSSAPFFIFSLLSWWVP) traverse the membrane as a helical segment. Topologically, residues 258-327 (ESIRWLVLSG…FRVSILRRVT (70 aa)) are cytoplasmic. The chain crosses the membrane as a helical span at residues 328–348 (FCLSLAWFSTGFAYYSLAMGV). Residues 349-354 (EEFGVN) are Extracellular-facing. The chain crosses the membrane as a helical span at residues 355 to 375 (IYILQIIFGGVDIPAKFITIL). Over 376–383 (SLSYLGRR) the chain is Cytoplasmic. A helical transmembrane segment spans residues 384–404 (ITQSFLLLLAGGAILALIFVP). At 405–411 (SEMQLLR) the chain is on the extracellular side. Residues 412–432 (TALAVFGKGCLSGSFSCLFLY) form a helical membrane-spanning segment. Residues 433 to 471 (TSELYPTVLRQTGMGISNVWARVGSMIAPLVKITGELQP) lie on the Cytoplasmic side of the membrane. A helical membrane pass occupies residues 472-492 (FIPNVIFGTTALLGGSAAFFL). Topologically, residues 493–536 (LETLNRPLPETIEDIQNWHKQVQKTKQESEAEKASQIIPLKTGG) are extracellular. Residues 515–536 (QKTKQESEAEKASQIIPLKTGG) form a disordered region.

The protein belongs to the major facilitator (TC 2.A.1) superfamily. Organic cation transporter (TC 2.A.1.19) family. Expressed in the liver, brain, kidney, choroid plexus and weakly in the eye. Moderately expressed (at protein level) in the brain capillary endothelial cells (BCEC).

The protein localises to the basolateral cell membrane. The catalysed reaction is estrone 3-sulfate(out) + glutarate(in) = estrone 3-sulfate(in) + glutarate(out). It catalyses the reaction estrone 3-sulfate(in) + 2-oxoglutarate(out) = estrone 3-sulfate(out) + 2-oxoglutarate(in). It carries out the reaction glutarate(in) + 2-oxoglutarate(out) = glutarate(out) + 2-oxoglutarate(in). The enzyme catalyses urate(in) + 2-oxoglutarate(out) = urate(out) + 2-oxoglutarate(in). The catalysed reaction is taurocholate(out) + glutarate(in) = taurocholate(in) + glutarate(out). It catalyses the reaction dehydroepiandrosterone 3-sulfate(out) + glutarate(in) = dehydroepiandrosterone 3-sulfate(in) + glutarate(out). It carries out the reaction prostaglandin F2alpha(out) + glutarate(in) = prostaglandin F2alpha(in) + glutarate(out). The enzyme catalyses prostaglandin F2alpha(out) + 2-oxoglutarate(in) = prostaglandin F2alpha(in) + 2-oxoglutarate(out). The catalysed reaction is (R)-carnitine(out) + 2-oxoglutarate(in) = (R)-carnitine(in) + 2-oxoglutarate(out). It catalyses the reaction glutarate(in) + (R)-carnitine(out) = glutarate(out) + (R)-carnitine(in). It carries out the reaction prostaglandin E2(out) + 2-oxoglutarate(in) = prostaglandin E2(in) + 2-oxoglutarate(out). The enzyme catalyses prostaglandin E2(out) + glutarate(in) = prostaglandin E2(in) + glutarate(out). The catalysed reaction is urate(in) + glutarate(out) = urate(out) + glutarate(in). It catalyses the reaction taurocholate(out) + 2-oxoglutarate(in) = taurocholate(in) + 2-oxoglutarate(out). It carries out the reaction dehydroepiandrosterone 3-sulfate(out) + 2-oxoglutarate(in) = dehydroepiandrosterone 3-sulfate(in) + 2-oxoglutarate(out). The enzyme catalyses kynurenate(out) + a dicarboxylate(in) = kynurenate(in) + a dicarboxylate(out). The catalysed reaction is (indol-3-yl)acetate(out) + a dicarboxylate(in) = (indol-3-yl)acetate(in) + a dicarboxylate(out). It catalyses the reaction indoxyl sulfate(out) + a dicarboxylate(in) = indoxyl sulfate(in) + a dicarboxylate(out). It carries out the reaction N-benzoylglycine(out) + a dicarboxylate(in) = N-benzoylglycine(in) + a dicarboxylate(out). The enzyme catalyses 3-carboxy-4-methyl-5-propyl-2-furanpropanoate(out) + a dicarboxylate(in) = 3-carboxy-4-methyl-5-propyl-2-furanpropanoate(in) + a dicarboxylate(out). The catalysed reaction is (6R)-L-erythro-5,6,7,8-tetrahydrobiopterin(out) + a dicarboxylate(in) = (6R)-L-erythro-5,6,7,8-tetrahydrobiopterin(in) + a dicarboxylate(out). It catalyses the reaction L-erythro-7,8-dihydrobiopterin(out) + a dicarboxylate(in) = L-erythro-7,8-dihydrobiopterin(in) + a dicarboxylate(out). It carries out the reaction L-sepiapterin(out) + a dicarboxylate(in) = L-sepiapterin(in) + a dicarboxylate(out). Functionally, functions as an organic anion/dicarboxylate exchanger that couples organic anion uptake indirectly to the sodium gradient. Transports organic anions such as estrone 3-sulfate (E1S) and urate in exchange for dicarboxylates such as glutarate or ketoglutarate (2-oxoglutarate). Plays an important role in the excretion of endogenous and exogenous organic anions, especially from the kidney and the brain. E1S transport is pH- and chloride-dependent and may also involve E1S/cGMP exchange. Responsible for the transport of prostaglandin E2 (PGE2) and prostaglandin F2(alpha) (PGF2(alpha)) in the basolateral side of the renal tubule. Involved in the transport of neuroactive tryptophan metabolites kynurenate and xanthurenate. Functions as a biopterin transporters involved in the uptake and the secretion of coenzymes tetrahydrobiopterin (BH4), dihydrobiopterin (BH2) and sepiapterin to urine, thereby determining baseline levels of blood biopterins. May be involved in the basolateral transport of steviol, a metabolite of the popular sugar substitute stevioside. May participate in the detoxification/ renal excretion of drugs and xenobiotics, such as the histamine H(2)-receptor antagonists fexofenadine and cimetidine, the antibiotic benzylpenicillin (PCG), the anionic herbicide 2,4-dichloro-phenoxyacetate (2,4-D), the diagnostic agent p-aminohippurate (PAH), the antiviral acyclovir (ACV), and the mycotoxin ochratoxin (OTA), by transporting these exogenous organic anions across the cell membrane in exchange for dicarboxylates such as 2-oxoglutarate. Contributes to the renal uptake of potent uremic toxins (indoxyl sulfate (IS), indole acetate (IA), hippurate/N-benzoylglycine (HA) and 3-carboxy-4-methyl-5-propyl-2-furanpropionate (CMPF)), pravastatin, PCG, E1S and dehydroepiandrosterone sulfate (DHEAS), and is partly involved in the renal uptake of temocaprilat (an angiotensin-converting enzyme (ACE) inhibitor). May contribute to the release of cortisol in the adrenals. Involved in one of the detoxification systems on the choroid plexus (CP), removes substrates such as E1S or taurocholate (TC), PCG, 2,4-D and PAH, from the cerebrospinal fluid (CSF) to the blood for eventual excretion in urine and bile. Regulates the CSF concentration of histamine H(2)-receptor antagonists cimetidine and ranitidine at the CP. Also contributes to the uptake of several other organic compounds such as the prostanoids prostaglandin E(2) and prostaglandin F(2-alpha), L-carnitine, and the therapeutic drugs allopurinol, 6-mercaptopurine (6-MP) and 5-fluorouracil (5-FU). Mediates the uptake from brain of organic anions, such as E1S, PAH, and OTA. Mediates the transport of PAH, PCG, and the statins pravastatin and pitavastatin, from the cerebrum into the blood circulation across the blood-brain barrier (BBB). In summary, plays a role in the efflux of drugs and xenobiotics, helping reduce their undesired toxicological effects on the body. The polypeptide is Organic anion transporter 3 (Slc22a8) (Rattus norvegicus (Rat)).